The chain runs to 321 residues: Phosphatidate cytidylyltransferase, mitochondrial (321 aa).

The protein belongs to the TAM41 family. Mg(2+) serves as cofactor. It depends on Co(2+) as a cofactor. The cofactor is Cu(2+).

It is found in the mitochondrion inner membrane. The enzyme catalyses a 1,2-diacyl-sn-glycero-3-phosphate + CTP + H(+) = a CDP-1,2-diacyl-sn-glycerol + diphosphate. The protein operates within phospholipid metabolism; CDP-diacylglycerol biosynthesis; CDP-diacylglycerol from sn-glycerol 3-phosphate: step 3/3. Catalyzes the formation of CDP-diacylglycerol (CDP-DAG) from phosphatidic acid (PA) in the mitochondrial inner membrane. Required for the biosynthesis of the dimeric phospholipid cardiolipin, which stabilizes supercomplexes of the mitochondrial respiratory chain in the mitochondrial inner membrane. The chain is Phosphatidate cytidylyltransferase, mitochondrial from Caenorhabditis elegans.